Here is a 153-residue protein sequence, read N- to C-terminus: Ribonuclease H (153 aa).

An RNase H type-1 domain is found at 1 to 141 (MKHVHIFTDG…ADELARKGME (141 aa)). The Mg(2+) site is built by Asp-9, Glu-47, Asp-69, and Asp-133. The tract at residues 123–153 (HAGHPENERADELARKGMEPFKKARRADAVK) is disordered. The span at 125–153 (GHPENERADELARKGMEPFKKARRADAVK) shows a compositional bias: basic and acidic residues.

It belongs to the RNase H family. In terms of assembly, monomer. It depends on Mg(2+) as a cofactor.

It is found in the cytoplasm. It carries out the reaction Endonucleolytic cleavage to 5'-phosphomonoester.. Endonuclease that specifically degrades the RNA of RNA-DNA hybrids. This is Ribonuclease H from Rhizobium meliloti (strain 1021) (Ensifer meliloti).